We begin with the raw amino-acid sequence, 1235 residues long: MPAGGRAGSLKDPDVAELFFKDDPEKLFSDLREIGHGSFGAVYFARDVRNSEVVAIKKMSYSGKQSNEKWQDIIKEVRFLQKLRHPNTIQYRGCYLREHTAWLVMEYCLGSASDLLEVHKKPLQEVEIAAVTHGALQGLAYLHSHNMIHRDVKAGNILLSEPGLVKLGDFGSASIMAPANSFVGTPYWMAPEVILAMDEGQYDGKVDVWSLGITCIELAERKPPLFNMNAMSALYHIAQNESPALQSGHWSEYFRNFVDSCLQKIPQDRPTSEVLLKHRFVLRERPPTVIMDLIQRTKDAVRELDNLQYRKMKKILFQEAPNGPGAEAPEEEEEAEPYMHRAGTLTSLESSHSVPSMSISASSQSSSVNSLADASDNEEEEEEEEEEEEEEEEEGPESREMAMMQEGEHTVTSHSSIIHRLPGSDNLYDDPYQPEMTPGPLQPPAAPPTSTSSSSARRRAYCRNRDHFATIRTASLVSRQIQEHEQDSALREQLSGYKRMRRQHQKQLLALESRLRGEREEHSGRLQRELEAQRAGFGTEAEKLARRHQAIGEKEARAAQAEERKFQQHILGQQKKELAALLEAQKRTYKLRKEQLKEELQENPSTPKREKAEWLLRQKEQLQQCQAEEEAGLLRRQRQYFELQCRQYKRKMLLARHSLDQDLLREDLNKKQTQKDLECALLLRQHEATRELELRQLQAVQRTRAELTRLQHQTELGNQLEYNKRREQELRQKHAAQVRQQPKSLKVRAGQLPMGLPATGALGPLSTGTLSEEQPCSSGQEAILGQRMLGEEEEAVPERMILGKEGTTLEPEEQRILGEEMGTFSSSPQKHRSLVNEEDWDISKEMKESRVPSLASQERNIIGQEEAGAWNLWEKEHGNLVDMEFKLGWVQGPVLTPVPEEEEEEEEEGGAPIGTPRDPGDGCPSPDIPPEPPPSHLRQYPASQLPGFLSHGLLTGLSFAVGSSSGLLPLLLLLLLPLLAAQGGGGLQAALLALEVGLVGLGASYLFLCTALHLPPSLFLLLAQGTALGAVLSLSWRRGLMGVPLGLGAAWLLAWPSLALPLAAMAAGGKWVRQQGPQMRRGISRLWLRVLLRLSPMVFRALQGCAAVGDRGLFALYPKTNKNGFRSRLPVPWPRQGNPRTTQHPLALLARVWALCKGWNWRLARASHRLASCLPPWAVHILASWGLLKGERPSRIPRLLPRSQRRLGLSASRQLPPGTVAGRRSQTRRALPPWR.

Residue serine 9 is modified to Phosphoserine. A Protein kinase domain is found at 28 to 281 (FSDLREIGHG…SEVLLKHRFV (254 aa)). Residues 34-42 (IGHGSFGAV) and lysine 57 each bind ATP. 106–108 (EYC) is a staurosporine binding site. Aspartate 151 functions as the Proton acceptor in the catalytic mechanism. Glycine 155 contacts staurosporine. Serine 181 carries the phosphoserine modification. Residues 318–457 (QEAPNGPGAE…PTSTSSSSAR (140 aa)) are disordered. A compositionally biased stretch (low complexity) spans 350–374 (SSHSVPSMSISASSQSSSVNSLADA). Acidic residues predominate over residues 375-395 (SDNEEEEEEEEEEEEEEEEEG). Positions 396 to 411 (PESREMAMMQEGEHTV) are enriched in basic and acidic residues. The residue at position 416 (serine 416) is a Phosphoserine. 2 coiled-coil regions span residues 488 to 523 (SALR…EEHS) and 576 to 603 (KELA…LQEN). Serine 658 is subject to Phosphoserine. Residues 683-715 (LRQHEATRELELRQLQAVQRTRAELTRLQHQTE) adopt a coiled-coil conformation. Serine 777, serine 825, and serine 827 each carry phosphoserine. A disordered region spans residues 892-941 (GPVLTPVPEEEEEEEEEGGAPIGTPRDPGDGCPSPDIPPEPPPSHLRQYP). The span at 899-909 (PEEEEEEEEEG) shows a compositional bias: acidic residues. Residues 926–935 (PDIPPEPPPS) are compositionally biased toward pro residues. 3 helical membrane-spanning segments follow: residues 967–987 (LLPL…GGGL), 989–1009 (AALL…LFLC), and 1014–1034 (LPPS…VLSL). Residue arginine 1038 is modified to Phosphoserine. 2 helical membrane-spanning segments follow: residues 1040–1060 (LMGV…SLAL) and 1170–1190 (LASC…LLKG). Residues 1210-1235 (SASRQLPPGTVAGRRSQTRRALPPWR) are disordered.

The protein belongs to the protein kinase superfamily. STE Ser/Thr protein kinase family. STE20 subfamily. As to quaternary structure, self-associates. Interacts with MAP2K3 and MAP2K6. Interacts with tubulins. Interacts with MAP3K7 and interferes with MAP3K7-binding to CHUK and thus prevents NF-kappa-B activation. Isoform 2 interacts with PCDH8; this complex may also include CDH2. Requires Mg(2+) as cofactor. In terms of processing, autophosphorylated. Phosphorylated by ATM. Post-translationally, phosphorylated on Ser-1038 by MAPK14. This phosphorylation is required PCDH8 for endocytosis.

The protein localises to the cytoplasmic vesicle membrane. Its subcellular location is the cytoplasm. The protein resides in the cytoskeleton. It localises to the cell projection. It is found in the dendrite. It catalyses the reaction L-seryl-[protein] + ATP = O-phospho-L-seryl-[protein] + ADP + H(+). The enzyme catalyses L-threonyl-[protein] + ATP = O-phospho-L-threonyl-[protein] + ADP + H(+). Its activity is regulated as follows. Moderately inhibited by staurosporine, a broad-range protein kinase inhibitor. Serine/threonine-protein kinase involved in different processes such as membrane blebbing and apoptotic bodies formation DNA damage response and MAPK14/p38 MAPK stress-activated MAPK cascade. Phosphorylates itself, MBP, activated MAPK8, MAP2K3, MAP2K6 and tubulins. Activates the MAPK14/p38 MAPK signaling pathway through the specific activation and phosphorylation of the upstream MAP2K3 and MAP2K6 kinases. In response to DNA damage, involved in the G2/M transition DNA damage checkpoint by activating the p38/MAPK14 stress-activated MAPK cascade, probably by mediating phosphorylation of upstream MAP2K3 and MAP2K6 kinases. May affect microtubule organization and stability. May play a role in the osmotic stress-MAPK8 pathway. Prevents MAP3K7-mediated activation of CHUK, and thus NF-kappa-B activation. Isoform 2, but not isoform 1, is required for PCDH8 endocytosis. Following homophilic interactions between PCDH8 extracellular domains, isoform 2 phosphorylates and activates MAPK14/p38 MAPK which in turn phosphorylates isoform 2. This process leads to PCDH8 endocytosis and CDH2 cointernalization. Both isoforms are involved in MAPK14/p38 MAPK activation. This chain is Serine/threonine-protein kinase TAO2 (Taok2), found in Rattus norvegicus (Rat).